We begin with the raw amino-acid sequence, 285 residues long: Inositol monophosphatase 1 (285 aa).

Mg(2+)-binding residues include Glu-73, Asp-93, Ile-95, and Asp-96. Glu-73 lines the substrate pocket. Substrate is bound by residues 95–98 (IDGT), 198–200 (GTA), Glu-217, and Asp-224. Position 224 (Asp-224) interacts with Mg(2+).

It belongs to the inositol monophosphatase superfamily. As to quaternary structure, homodimer. Requires Mg(2+) as cofactor.

It is found in the cytoplasm. The catalysed reaction is a myo-inositol phosphate + H2O = myo-inositol + phosphate. The enzyme catalyses 1D-myo-inositol 1-phosphate + H2O = myo-inositol + phosphate. It catalyses the reaction 1D-myo-inositol 2-phosphate + H2O = myo-inositol + phosphate. It carries out the reaction 1D-myo-inositol 3-phosphate + H2O = myo-inositol + phosphate. The catalysed reaction is 1D-myo-inositol 4-phosphate + H2O = myo-inositol + phosphate. The enzyme catalyses 1D-myo-inositol 5-phosphate + H2O = myo-inositol + phosphate. It catalyses the reaction 1D-myo-inositol 6-phosphate + H2O = myo-inositol + phosphate. It carries out the reaction scyllo-inositol 1-phosphate + H2O = scyllo-inositol + phosphate. The catalysed reaction is alpha-D-galactose 1-phosphate + H2O = D-galactose + phosphate. The enzyme catalyses alpha-D-glucose 1-phosphate + H2O = D-glucose + phosphate. It catalyses the reaction D-glucose 6-phosphate + H2O = D-glucose + phosphate. It carries out the reaction beta-D-fructose 1-phosphate + H2O = D-fructose + phosphate. The catalysed reaction is glycerol 2-phosphate + H2O = glycerol + phosphate. The enzyme catalyses adenosine 2'-phosphate + H2O = adenosine + phosphate. Its pathway is polyol metabolism; myo-inositol biosynthesis; myo-inositol from D-glucose 6-phosphate: step 2/2. With respect to regulation, inhibited by Li(+), Ca(2+) and Mn(2+), but also by Mg(2+) at concentrations above 3 mM. Functionally, phosphatase involved in the dephosphorylation of myo-inositol monophosphate to generate myo-inositol. Is also able to dephosphorylate scyllo-inositol-phosphate, myo-inositol 1,4-diphosphate, scyllo-inositol-1,3-diphosphate and scyllo-inositol-1,4-diphosphate. Also dephosphorylates in vitro other sugar-phosphates including D-galactose-1-phosphate, glucose-1-phosphate, glucose-6-phosphate, fructose-1-phosphate, beta-glycerophosphate and 2'-AMP. Responsible for the provision of inositol required for synthesis of phosphatidylinositol and polyphosphoinositides, and involved in maintaining normal brain function. Has been implicated as the pharmacological target for lithium Li(+) action in brain. The sequence is that of Inositol monophosphatase 1 (impa1) from Xenopus laevis (African clawed frog).